A 157-amino-acid polypeptide reads, in one-letter code: Large ribosomal subunit protein uL15 (157 aa).

Residues 1–41 (MKLHELSDNPGATKKRKRVGRGPGSGTGKMGGRGIKGQKSR) are disordered. The span at 21-35 (RGPGSGTGKMGGRGI) shows a compositional bias: gly residues.

Belongs to the universal ribosomal protein uL15 family. As to quaternary structure, part of the 50S ribosomal subunit.

Binds to the 23S rRNA. The chain is Large ribosomal subunit protein uL15 from Jannaschia sp. (strain CCS1).